A 957-amino-acid chain; its full sequence is ERC protein 2 (957 aa).

The segment covering 1–13 (MYGSARTITNLEG) has biased composition (polar residues). The disordered stretch occupies residues 1 to 44 (MYGSARTITNLEGSPSRSPRLPRSPRLGHRRTSSGGGGGTGKTL). Positions 14 to 25 (SPSRSPRLPRSP) are enriched in low complexity. S65 and S666 each carry phosphoserine. Residues 140–917 (RQVRDSTMLD…RMKLMADNYD (778 aa)) adopt a coiled-coil conformation. Residues 918–957 (DDHHHYHHHHHHHHHRSPGRSQHSNHRPSPDQDDEEGIWA) form a disordered region. Residues 922-943 (HYHHHHHHHHHRSPGRSQHSNH) are compositionally biased toward basic residues. The span at 948–957 (DQDDEEGIWA) shows a compositional bias: acidic residues.

As to quaternary structure, interacts with BSN, ERC1, PPFIA1, PPFIA2, PPFIA3 and PPFIA4. Interacts through its C-terminus with the PDZ domain of RIMS1. Part of a complex consisting of ERC2, RIMS1 and UNC13A.

Its subcellular location is the cytoplasm. It is found in the synapse. The protein localises to the presynaptic active zone. It localises to the cytoskeleton. Thought to be involved in the organization of the cytomatrix at the nerve terminals active zone (CAZ) which regulates neurotransmitter release. Seems to act together with BSN. May recruit liprin-alpha proteins to the CAZ. In Homo sapiens (Human), this protein is ERC protein 2 (ERC2).